The sequence spans 126 residues: Holo-[acyl-carrier-protein] synthase (126 aa).

Mg(2+) is bound by residues Asp-9 and Glu-58.

This sequence belongs to the P-Pant transferase superfamily. AcpS family. Requires Mg(2+) as cofactor.

The protein resides in the cytoplasm. The catalysed reaction is apo-[ACP] + CoA = holo-[ACP] + adenosine 3',5'-bisphosphate + H(+). Its function is as follows. Transfers the 4'-phosphopantetheine moiety from coenzyme A to a Ser of acyl-carrier-protein. The polypeptide is Holo-[acyl-carrier-protein] synthase (Vibrio atlanticus (strain LGP32) (Vibrio splendidus (strain Mel32))).